The primary structure comprises 429 residues: MRDALNTGLIEFLKASPTPFHATASLVQRLEAAGYKRLDERDSWDPETGGRYYVTRNDSSIIAIKLGKQSPLLNGIRMVGAHTDSPCLRVKPQPELQRQGFLQLGVEVYGGALLAPWFDRDLSLAGRVTYRRDGKVESQLIDFKLPIAIIPNLAIHLNRTANEGWAINPQNELPPILAQVAGDERIDFRALLTEQLAREHELIADVVLDYELSFYDTQDAALIGLNGDFIAGARLDNLLSCYAGLQALLAADSDETCVLVCNDHEEVGSCSACGADGPMLEQTLQRLLPDGDTYVRTLQRSLMVSADNAHGVHPNYADKHDGNHGPKLNAGPVIKVNNNQRYATNSETAGFFRHLCMAEEVPVQSFVVRSDMGCGSTIGPITASHLGVRTVDIGLPTFAMHSIRELCGSHDLAHLVKVLTAFYRSRELP.

Residues histidine 82, histidine 156, and histidine 401 each contribute to the Zn(2+) site.

Belongs to the peptidase M18 family. It depends on Zn(2+) as a cofactor.

The sequence is that of Probable M18 family aminopeptidase 2 from Pseudomonas putida (strain ATCC 700007 / DSM 6899 / JCM 31910 / BCRC 17059 / LMG 24140 / F1).